The sequence spans 1887 residues: Protein TIC 214 (1887 aa).

Helical transmembrane passes span 18–38 (IINS…FSIG), 64–84 (FITG…HLAL), 87–107 (PHTI…WNNH), 124–144 (LSIQ…HFIL), 172–192 (VGWL…LVWI), and 221–241 (IFSI…PSPI). Disordered stretches follow at residues 248 to 300 (EASK…EGWD), 786 to 805 (EEQT…DNKR), and 1569 to 1603 (LPSN…NLSP). The span at 256-268 (VESEEERDVEIET) shows a compositional bias: acidic residues. Residues 775–816 (KEREFKILESREEQTKREEKKEKDKKEDNKRKEQARIAIEEA) are a coiled coil. The segment covering 1578 to 1597 (RSQETKEPPSQRERGSDIEN) has biased composition (basic and acidic residues).

This sequence belongs to the TIC214 family. Part of the Tic complex.

The protein localises to the plastid. It localises to the chloroplast inner membrane. Involved in protein precursor import into chloroplasts. May be part of an intermediate translocation complex acting as a protein-conducting channel at the inner envelope. This chain is Protein TIC 214, found in Solanum bulbocastanum (Wild potato).